Consider the following 614-residue polypeptide: ATP-dependent rRNA helicase SPB4 (614 aa).

The short motif at 10-38 (WSVLKCDLHPWIKEAIKSLGYPTMTPVQA) is the Q motif element. In terms of domain architecture, Helicase ATP-binding spans 41–233 (IPLFSGNKDV…RTGMANPVKI (193 aa)). ATP is bound at residue 54-61 (AVTGSGKT). The DEAD box signature appears at 181–184 (DEAD). The Helicase C-terminal domain maps to 260 to 431 (KISALIALIK…KFQKKFRKYM (172 aa)). The stretch at 510-581 (EYADKQKEES…IEKQLMDDSS (72 aa)) forms a coiled coil. Residues 514-529 (KQKEESRKKNLEEDKA) show a composition bias toward basic and acidic residues. Positions 514-614 (KQKEESRKKN…DSMQGSFDDL (101 aa)) are disordered. The segment covering 530–541 (RKVHDAKKRKEL) has biased composition (basic residues). Composition is skewed to basic and acidic residues over residues 551–563 (KTDK…ERRE) and 584–595 (EETKVDWKEMVK). Over residues 604 to 614 (SDSMQGSFDDL) the composition is skewed to polar residues.

It belongs to the DEAD box helicase family. DDX55/SPB4 subfamily. Component of pre-60S ribosomal complexes.

The protein localises to the nucleus. The protein resides in the nucleolus. The enzyme catalyses ATP + H2O = ADP + phosphate + H(+). Functionally, ATP-binding RNA helicase involved in the biogenesis of 60S ribosomal subunits. Binds 90S pre-ribosomal particles and dissociates from pre-60S ribosomal particles after processing of 27SB pre-rRNA. Required for the normal formation of 18S rRNA through the processing of pre-rRNAs at sites A0, A1 and A2, and the normal formation of 25S and 5.8S rRNAs through the processing of pre-rRNAs at sites C1 and C2. The polypeptide is ATP-dependent rRNA helicase SPB4 (Debaryomyces hansenii (strain ATCC 36239 / CBS 767 / BCRC 21394 / JCM 1990 / NBRC 0083 / IGC 2968) (Yeast)).